Consider the following 214-residue polypeptide: MSTKVPIYLKRGSRKGKKEKLRDLLSSDMISPPLGDFRHTIHIGSGGGDDMFGDISFLQGKFHLLPGTAVEEAEEDGSFDLPFQFTRTTTVCGRELPGGLSPLLKNAISLPVIGGPQALTLPTTQAPPKPPRLHLESPQPSPKSSPQEAGNVDIWRVPEAGLPHNGMSPEPEAEEPFLSHASSLLSLHVDLGPSILDDVLQIMDQDLGRVQIPT.

Ser2 is modified (N-acetylserine). The CRIB domain maps to 30–44; the sequence is ISPPLGDFRHTIHIG. 5 positions are modified to phosphoserine: Ser31, Ser101, Ser137, Ser141, and Ser145. The segment at 118–151 is disordered; that stretch reads ALTLPTTQAPPKPPRLHLESPQPSPKSSPQEAGN.

The protein belongs to the BORG/CEP family. In terms of assembly, interacts with CDC42 and RHOQ, in a GTP-dependent manner, and with SEPT7.

The protein resides in the endomembrane system. The protein localises to the cytoplasm. It localises to the cytoskeleton. Its function is as follows. Probably involved in the organization of the actin cytoskeleton. May act downstream of CDC42 to induce actin filament assembly leading to cell shape changes. Induces pseudopodia formation in fibroblasts in a CDC42-dependent manner. This Rattus norvegicus (Rat) protein is Cdc42 effector protein 2 (Cdc42ep2).